A 150-amino-acid polypeptide reads, in one-letter code: Large ribosomal subunit protein bL9 (150 aa).

The protein belongs to the bacterial ribosomal protein bL9 family.

Its function is as follows. Binds to the 23S rRNA. This Pseudoalteromonas atlantica (strain T6c / ATCC BAA-1087) protein is Large ribosomal subunit protein bL9.